Consider the following 454-residue polypeptide: Glutamyl-tRNA reductase (454 aa).

Residues 49 to 52 (TCNR), Ser109, 114 to 116 (ETQ), and Gln120 each bind substrate. Cys50 acts as the Nucleophile in catalysis. 189–194 (GAGKMS) contributes to the NADP(+) binding site. A disordered region spans residues 434–454 (NDKNKQTSSSREQVLVSRFPD).

Belongs to the glutamyl-tRNA reductase family. As to quaternary structure, homodimer.

It catalyses the reaction (S)-4-amino-5-oxopentanoate + tRNA(Glu) + NADP(+) = L-glutamyl-tRNA(Glu) + NADPH + H(+). Its pathway is porphyrin-containing compound metabolism; protoporphyrin-IX biosynthesis; 5-aminolevulinate from L-glutamyl-tRNA(Glu): step 1/2. In terms of biological role, catalyzes the NADPH-dependent reduction of glutamyl-tRNA(Glu) to glutamate 1-semialdehyde (GSA). This Brevibacillus brevis (strain 47 / JCM 6285 / NBRC 100599) protein is Glutamyl-tRNA reductase.